Consider the following 251-residue polypeptide: Phosphate import ATP-binding protein PstB (251 aa).

One can recognise an ABC transporter domain in the interval 5-246; it reads IKIRGVNFFY…PRDKRTEDYI (242 aa). Position 37-44 (37-44) interacts with ATP; that stretch reads GPSGCGKS.

It belongs to the ABC transporter superfamily. Phosphate importer (TC 3.A.1.7) family. In terms of assembly, the complex is composed of two ATP-binding proteins (PstB), two transmembrane proteins (PstC and PstA) and a solute-binding protein (PstS).

The protein resides in the cell membrane. It carries out the reaction phosphate(out) + ATP + H2O = ADP + 2 phosphate(in) + H(+). Functionally, part of the ABC transporter complex PstSACB involved in phosphate import. Responsible for energy coupling to the transport system. The protein is Phosphate import ATP-binding protein PstB of Dehalococcoides mccartyi (strain CBDB1).